Consider the following 63-residue polypeptide: Potassium channel toxin Sp4 (63 aa).

Residues 1–20 (MNKVHFALFLLVLTVLAVSG) form the signal peptide. 3 cysteine pairs are disulfide-bonded: C31-C53, C38-C58, and C42-C60.

Belongs to the long chain scorpion toxin family. Class 2 subfamily. Expressed by the venom gland.

Its subcellular location is the secreted. This recombinant toxin selectively inhibits mouse voltage-gated potassium channel Kv1.3/KCNA3 (IC(50)=24.73 nM). In Scorpiops pococki (Scorpion), this protein is Potassium channel toxin Sp4.